Here is a 127-residue protein sequence, read N- to C-terminus: Thioredoxin domain-containing protein 8 (127 aa).

The 126-residue stretch at 2–127 (VKRIKNMSEL…QLEKKIQELM (126 aa)) folds into the Thioredoxin domain. An intrachain disulfide couples Cys-32 to Cys-35.

Belongs to the thioredoxin family. Testis-specific. Only expressed during spermiogenesis, prominently in the Golgi apparatus of pachytene spermatocytes and round and elongated spermatids, with a transient localization in the developing acrosome of round spermatids (at protein level).

It localises to the cytoplasm. The protein localises to the golgi apparatus. Its function is as follows. May be required for post-translational modifications of proteins required for acrosomal biogenesis. May act by reducing disulfide bonds within the sperm. In Mus musculus (Mouse), this protein is Thioredoxin domain-containing protein 8 (Txndc8).